Consider the following 93-residue polypeptide: Large ribosomal subunit protein eL42 (93 aa).

Positions 11, 14, 71, and 74 each coordinate Zn(2+). A C4-type zinc finger spans residues 11–74 (CPYCKKHTSH…IALRLVCDEC (64 aa)).

Belongs to the eukaryotic ribosomal protein eL42 family. As to quaternary structure, part of the 50S ribosomal subunit. The cofactor is Zn(2+).

Binds to the 23S rRNA. This is Large ribosomal subunit protein eL42 from Thermoplasma acidophilum (strain ATCC 25905 / DSM 1728 / JCM 9062 / NBRC 15155 / AMRC-C165).